The following is a 111-amino-acid chain: Large ribosomal subunit protein uL22 (111 aa).

It belongs to the universal ribosomal protein uL22 family. Part of the 50S ribosomal subunit.

Functionally, this protein binds specifically to 23S rRNA; its binding is stimulated by other ribosomal proteins, e.g. L4, L17, and L20. It is important during the early stages of 50S assembly. It makes multiple contacts with different domains of the 23S rRNA in the assembled 50S subunit and ribosome. In terms of biological role, the globular domain of the protein is located near the polypeptide exit tunnel on the outside of the subunit, while an extended beta-hairpin is found that lines the wall of the exit tunnel in the center of the 70S ribosome. This is Large ribosomal subunit protein uL22 from Wigglesworthia glossinidia brevipalpis.